Consider the following 448-residue polypeptide: Nuclear distribution protein PAC1 (448 aa).

The region spanning 9-41 (QAEELHKSIIAYLAANNFQDSVTAMRTELNLGE) is the LisH domain. Residues 74-95 (SATPTSLSNRKQDPASWLPAGP) are disordered. 7 WD repeats span residues 102 to 143 (SHRT…RTVK), 145 to 185 (HTKA…KNIR), 189 to 236 (GHDH…CLKT), 239 to 278 (GHSDWIRDVSPSLDGKYLLSTGNDRTLRLWDISMNTPETK), 283 to 343 (GHEH…IKTL), 345 to 384 (GHDNWVRSLVFHPSGKFLLSVSDDKTIRCWDLSQEGKCVK), and 389 to 444 (MHEH…TSLR).

Belongs to the WD repeat LIS1/nudF family. In terms of assembly, self-associates. Interacts with NDL1 and dynein.

It is found in the cytoplasm. The protein localises to the cytoskeleton. Its subcellular location is the spindle pole. In terms of biological role, positively regulates the activity of the minus-end directed microtubule motor protein dynein. May enhance dynein-mediated microtubule sliding by targeting dynein to the microtubule plus end. Required for nuclear migration during vegetative growth as well as development. Required for retrograde early endosome (EE) transport from the hyphal tip. Required for localization of dynein to the mitotic spindle poles. Recruits additional proteins to the dynein complex at SPBs. In Fusarium vanettenii (strain ATCC MYA-4622 / CBS 123669 / FGSC 9596 / NRRL 45880 / 77-13-4) (Fusarium solani subsp. pisi), this protein is Nuclear distribution protein PAC1.